A 351-amino-acid chain; its full sequence is Putative ABC transporter permease protein MJ0876 (351 aa).

9 helical membrane-spanning segments follow: residues 4–24 (VGIL…ALYL), 59–79 (LPPI…GLML), 99–119 (VLMV…FEIF), 124–144 (ILVA…IIAL), 152–172 (VIIV…YLIA), 196–216 (GDVI…MFLI), 249–269 (FITG…IIAP), 284–304 (LVPA…ILSL), and 322–342 (PLPI…YLVY).

The protein belongs to the binding-protein-dependent transport system permease family. FecCD subfamily.

Its subcellular location is the cell membrane. Its function is as follows. Probably part of a binding-protein-dependent transport system. Probably responsible for the translocation of the substrate across the membrane. The sequence is that of Putative ABC transporter permease protein MJ0876 from Methanocaldococcus jannaschii (strain ATCC 43067 / DSM 2661 / JAL-1 / JCM 10045 / NBRC 100440) (Methanococcus jannaschii).